A 237-amino-acid polypeptide reads, in one-letter code: Leucyl/phenylalanyl-tRNA--protein transferase (237 aa).

The protein belongs to the L/F-transferase family.

The protein localises to the cytoplasm. The enzyme catalyses N-terminal L-lysyl-[protein] + L-leucyl-tRNA(Leu) = N-terminal L-leucyl-L-lysyl-[protein] + tRNA(Leu) + H(+). It carries out the reaction N-terminal L-arginyl-[protein] + L-leucyl-tRNA(Leu) = N-terminal L-leucyl-L-arginyl-[protein] + tRNA(Leu) + H(+). The catalysed reaction is L-phenylalanyl-tRNA(Phe) + an N-terminal L-alpha-aminoacyl-[protein] = an N-terminal L-phenylalanyl-L-alpha-aminoacyl-[protein] + tRNA(Phe). Functions in the N-end rule pathway of protein degradation where it conjugates Leu, Phe and, less efficiently, Met from aminoacyl-tRNAs to the N-termini of proteins containing an N-terminal arginine or lysine. The sequence is that of Leucyl/phenylalanyl-tRNA--protein transferase from Shewanella baltica (strain OS223).